The following is a 368-amino-acid chain: tRNA/tmRNA (uracil-C(5))-methyltransferase (368 aa).

S-adenosyl-L-methionine contacts are provided by Gln190, Tyr218, Asn223, Glu239, and Asp301. Residue Cys326 is the Nucleophile of the active site. Residue Glu360 is the Proton acceptor of the active site.

Belongs to the class I-like SAM-binding methyltransferase superfamily. RNA M5U methyltransferase family. TrmA subfamily.

It carries out the reaction uridine(54) in tRNA + S-adenosyl-L-methionine = 5-methyluridine(54) in tRNA + S-adenosyl-L-homocysteine + H(+). The enzyme catalyses uridine(341) in tmRNA + S-adenosyl-L-methionine = 5-methyluridine(341) in tmRNA + S-adenosyl-L-homocysteine + H(+). Dual-specificity methyltransferase that catalyzes the formation of 5-methyluridine at position 54 (m5U54) in all tRNAs, and that of position 341 (m5U341) in tmRNA (transfer-mRNA). The chain is tRNA/tmRNA (uracil-C(5))-methyltransferase from Aliivibrio fischeri (strain MJ11) (Vibrio fischeri).